A 477-amino-acid chain; its full sequence is Sucrose-6-phosphate hydrolase (477 aa).

Residues 36–39 (WMND), Q55, W63, 98–99 (FS), 160–161 (RD), E215, and W298 contribute to the substrate site. D39 is an active-site residue.

This sequence belongs to the glycosyl hydrolase 32 family.

The protein resides in the cytoplasm. The enzyme catalyses Hydrolysis of terminal non-reducing beta-D-fructofuranoside residues in beta-D-fructofuranosides.. The protein operates within glycan biosynthesis; sucrose metabolism. Enables the bacterium to metabolize sucrose as a sole carbon source. In Escherichia coli, this protein is Sucrose-6-phosphate hydrolase (cscA).